A 150-amino-acid polypeptide reads, in one-letter code: Large ribosomal subunit protein bL9 (150 aa).

It belongs to the bacterial ribosomal protein bL9 family.

In terms of biological role, binds to the 23S rRNA. This is Large ribosomal subunit protein bL9 from Yersinia enterocolitica serotype O:8 / biotype 1B (strain NCTC 13174 / 8081).